The primary structure comprises 329 residues: Malate dehydrogenase (329 aa).

12–18 contacts NAD(+); it reads GAAGQIG. The substrate site is built by Arg95 and Arg101. NAD(+) is bound by residues Asn108, Gln115, and 132 to 134; that span reads VGN. Residues Asn134 and Arg165 each coordinate substrate. His190 acts as the Proton acceptor in catalysis.

Belongs to the LDH/MDH superfamily. MDH type 2 family.

The enzyme catalyses (S)-malate + NAD(+) = oxaloacetate + NADH + H(+). Catalyzes the reversible oxidation of malate to oxaloacetate. In Bordetella avium (strain 197N), this protein is Malate dehydrogenase.